A 455-amino-acid polypeptide reads, in one-letter code: Growth/differentiation factor 9 (455 aa).

An N-terminal signal peptide occupies residues 1-24; it reads MALPNKFLLWFYCFAWLCFPVSLG. Positions 25 to 320 are excised as a propeptide; it reads SQASGGDAQI…GRSSHHRHRR (296 aa). Asn106, Asn163, Asn236, Asn255, and Asn269 each carry an N-linked (GlcNAc...) asparagine glycan. The segment at 305–328 is disordered; it reads EDAAEDGRSSHHRHRRGQETVSSE. Asn339 carries an N-linked (GlcNAc...) asparagine glycan. Disulfide bonds link Cys354-Cys420, Cys383-Cys452, and Cys387-Cys454.

Belongs to the TGF-beta family. Homodimer or heterodimer (Potential). But, in contrast to other members of this family, cannot be disulfide-linked. Post-translationally, phosphorylated; phosphorylation is critical for GDF9 function.

It is found in the secreted. In terms of biological role, required for ovarian folliculogenesis. This chain is Growth/differentiation factor 9 (GDF9), found in Papio anubis (Olive baboon).